A 355-amino-acid polypeptide reads, in one-letter code: MSTTITNSTAERKHSHVDICLRGDVAFSTITTGLERYRLRHNALPELNYDNLSTETDFLGKRIGAPLMISSMTGGYSEAAELNGKLAEAAERFQLPLGVGSMRQALEESSHRDSFAVVRRHAPTTQIFANIGAPEIAKGLSSDDLQTMIEMIRADGLIIHLNAAQELFQPEGGTDFRRVLDEVAAITAKLSVPVIAKEVGCGISAPVARQLLNAGVRVIDVAGAGGISWQKVEEARYTRRFGTDDRFSTRGLEELLNWGTPTAECLVAVNALRENPTPPFSLIASGGIQSGIDIAKSIALGADLAASAGALLRSLHSGTLEETLTTWMNDLRAAMFLTGSATIAELQNNRPISKQ.

Residue 12 to 13 (RK) participates in substrate binding. FMN contacts are provided by residues Ser70, 71 to 73 (SMT), Ser101, and Asn130. 101–103 (SMR) serves as a coordination point for substrate. Gln165 is a substrate binding site. Glu166 is a binding site for Mg(2+). FMN-binding positions include Lys197 and 308–309 (AG).

This sequence belongs to the IPP isomerase type 2 family. Homooctamer. Dimer of tetramers. The cofactor is FMN. Requires NADPH as cofactor. Mg(2+) is required as a cofactor.

The protein resides in the cytoplasm. The enzyme catalyses isopentenyl diphosphate = dimethylallyl diphosphate. Its function is as follows. Involved in the biosynthesis of isoprenoids. Catalyzes the 1,3-allylic rearrangement of the homoallylic substrate isopentenyl (IPP) to its allylic isomer, dimethylallyl diphosphate (DMAPP). This is Isopentenyl-diphosphate delta-isomerase from Chlorobium phaeovibrioides (strain DSM 265 / 1930) (Prosthecochloris vibrioformis (strain DSM 265)).